A 225-amino-acid polypeptide reads, in one-letter code: Probable 3-keto-L-gulonate-6-phosphate decarboxylase (225 aa).

Aspartate 11 provides a ligand contact to substrate. The Mg(2+) site is built by glutamate 33 and aspartate 62. Arginine 202 is a binding site for substrate.

Belongs to the HPS/KGPDC family. KGPDC subfamily. In terms of assembly, homodimer. Mg(2+) is required as a cofactor.

The catalysed reaction is 3-dehydro-L-gulonate 6-phosphate + H(+) = L-xylulose 5-phosphate + CO2. Functionally, catalyzes the decarboxylation of 3-keto-L-gulonate-6-P into L-xylulose-5-P. The sequence is that of Probable 3-keto-L-gulonate-6-phosphate decarboxylase (sgbH) from Haemophilus influenzae (strain ATCC 51907 / DSM 11121 / KW20 / Rd).